The following is a 202-amino-acid chain: Ribonuclease HII (202 aa).

One can recognise an RNase H type-2 domain in the interval 1–195 (MIVAGVDEVG…PELKGGSPAG (195 aa)). Residues Asp-7, Glu-8, and Asp-103 each coordinate a divalent metal cation.

This sequence belongs to the RNase HII family. Mn(2+) serves as cofactor. Requires Mg(2+) as cofactor.

The protein resides in the cytoplasm. It carries out the reaction Endonucleolytic cleavage to 5'-phosphomonoester.. Endonuclease that specifically degrades the RNA of RNA-DNA hybrids. The sequence is that of Ribonuclease HII from Synechococcus sp. (strain RCC307).